Here is a 274-residue protein sequence, read N- to C-terminus: Putative phosphoenolpyruvate synthase regulatory protein (274 aa).

155–162 is an ADP binding site; that stretch reads GVSRSGKT.

It belongs to the pyruvate, phosphate/water dikinase regulatory protein family. PSRP subfamily.

It carries out the reaction [pyruvate, water dikinase] + ADP = [pyruvate, water dikinase]-phosphate + AMP + H(+). The catalysed reaction is [pyruvate, water dikinase]-phosphate + phosphate + H(+) = [pyruvate, water dikinase] + diphosphate. In terms of biological role, bifunctional serine/threonine kinase and phosphorylase involved in the regulation of the phosphoenolpyruvate synthase (PEPS) by catalyzing its phosphorylation/dephosphorylation. The sequence is that of Putative phosphoenolpyruvate synthase regulatory protein from Laribacter hongkongensis (strain HLHK9).